The primary structure comprises 122 residues: Large ribosomal subunit protein uL14 (122 aa).

It belongs to the universal ribosomal protein uL14 family. In terms of assembly, part of the 50S ribosomal subunit. Forms a cluster with proteins L3 and L19. In the 70S ribosome, L14 and L19 interact and together make contacts with the 16S rRNA in bridges B5 and B8.

Binds to 23S rRNA. Forms part of two intersubunit bridges in the 70S ribosome. This Shewanella amazonensis (strain ATCC BAA-1098 / SB2B) protein is Large ribosomal subunit protein uL14.